A 156-amino-acid polypeptide reads, in one-letter code: ATP synthase subunit b 1 (156 aa).

The chain crosses the membrane as a helical span at residues 7 to 29 (LLGQAISFALFVWFCMKYVWPPL).

This sequence belongs to the ATPase B chain family. In terms of assembly, F-type ATPases have 2 components, F(1) - the catalytic core - and F(0) - the membrane proton channel. F(1) has five subunits: alpha(3), beta(3), gamma(1), delta(1), epsilon(1). F(0) has three main subunits: a(1), b(2) and c(10-14). The alpha and beta chains form an alternating ring which encloses part of the gamma chain. F(1) is attached to F(0) by a central stalk formed by the gamma and epsilon chains, while a peripheral stalk is formed by the delta and b chains.

The protein resides in the cell inner membrane. Functionally, f(1)F(0) ATP synthase produces ATP from ADP in the presence of a proton or sodium gradient. F-type ATPases consist of two structural domains, F(1) containing the extramembraneous catalytic core and F(0) containing the membrane proton channel, linked together by a central stalk and a peripheral stalk. During catalysis, ATP synthesis in the catalytic domain of F(1) is coupled via a rotary mechanism of the central stalk subunits to proton translocation. In terms of biological role, component of the F(0) channel, it forms part of the peripheral stalk, linking F(1) to F(0). This Vibrio campbellii (strain ATCC BAA-1116) protein is ATP synthase subunit b 1.